The following is a 273-amino-acid chain: 2,3,4,5-tetrahydropyridine-2,6-dicarboxylate N-succinyltransferase (273 aa).

Positions 104 and 141 each coordinate substrate.

This sequence belongs to the transferase hexapeptide repeat family. In terms of assembly, homotrimer.

Its subcellular location is the cytoplasm. It catalyses the reaction (S)-2,3,4,5-tetrahydrodipicolinate + succinyl-CoA + H2O = (S)-2-succinylamino-6-oxoheptanedioate + CoA. Its pathway is amino-acid biosynthesis; L-lysine biosynthesis via DAP pathway; LL-2,6-diaminopimelate from (S)-tetrahydrodipicolinate (succinylase route): step 1/3. This chain is 2,3,4,5-tetrahydropyridine-2,6-dicarboxylate N-succinyltransferase, found in Psychrobacter cryohalolentis (strain ATCC BAA-1226 / DSM 17306 / VKM B-2378 / K5).